The following is a 499-amino-acid chain: Glucose-6-phosphate isomerase (499 aa).

Catalysis depends on Glu-352, which acts as the Proton donor. Catalysis depends on residues His-383 and Lys-487.

The protein belongs to the GPI family.

It localises to the cytoplasm. The catalysed reaction is alpha-D-glucose 6-phosphate = beta-D-fructose 6-phosphate. The protein operates within carbohydrate biosynthesis; gluconeogenesis. It participates in carbohydrate degradation; glycolysis; D-glyceraldehyde 3-phosphate and glycerone phosphate from D-glucose: step 2/4. Functionally, catalyzes the reversible isomerization of glucose-6-phosphate to fructose-6-phosphate. This chain is Glucose-6-phosphate isomerase, found in Legionella pneumophila (strain Lens).